Here is a 369-residue protein sequence, read N- to C-terminus: MPVVTTDAESETGIPKSLSNEPPSETMEEIEHTCPQPRLTLTAPAPFADETNCQCQAPHEKLTIAQARLGTPADRPVRVYADGIFDLFHSGHARALMQAKTLFPNSYLLVGVCSDDLTHKFKGFTVMNEAERYEALRHCRYVDEVIRDAPWTLTPEFLEKHKIDFVAHDDIPYSSAGSDDVYKHIKEAGMFVPTQRTEGISTSDIITRIVRDYDVYARRNLQRGYTAKELNVSFINEKRYRFQNQVDKMKEKVKNVEERSKEFVNRVEEKSHDLIQKWEEKSREFIGNFLELFGPDGAWKQMFQERSSRMLQALSPKQSPVSSPTRSRSPSRSPSPTFSWLPLKTSPPSSPKAASASISSMSEGDEDEK.

Positions 1 to 27 (MPVVTTDAESETGIPKSLSNEPPSETM) are disordered. 4 residues coordinate CTP: Ile-84, Phe-85, His-92, and Lys-122. Phosphocholine contacts are provided by Lys-122 and Trp-151. Residues His-168, Asp-169, Tyr-173, Gln-195, Arg-196, Thr-197, and Ile-200 each coordinate CTP. The tract at residues 309 to 369 (RMLQALSPKQ…SMSEGDEDEK (61 aa)) is disordered. Phosphoserine occurs at positions 315, 319, 322, 323, 329, 331, and 335. Low complexity predominate over residues 319 to 339 (SPVSSPTRSRSPSRSPSPTFS). At Thr-345 the chain carries Phosphothreonine. Ser-346, Ser-349, Ser-350, Ser-355, Ser-360, and Ser-362 each carry phosphoserine. The span at 351–362 (PKAASASISSMS) shows a compositional bias: low complexity.

Belongs to the cytidylyltransferase family. In terms of assembly, homodimer. Post-translationally, phosphorylated. Extensively phosphorylated. In terms of tissue distribution, highly expressed in testis, placenta, brain, ovary, liver and fetal lung. As to expression, expressed in brain, liver and fetal lung.

It localises to the cytoplasm. The protein localises to the endoplasmic reticulum. It carries out the reaction phosphocholine + CTP + H(+) = CDP-choline + diphosphate. The protein operates within phospholipid metabolism; phosphatidylcholine biosynthesis; phosphatidylcholine from phosphocholine: step 1/2. Catalyzes the key rate-limiting step in the CDP-choline pathway for phosphatidylcholine biosynthesis. In Homo sapiens (Human), this protein is Choline-phosphate cytidylyltransferase B (PCYT1B).